The chain runs to 417 residues: Probable phosphoglycerate kinase (417 aa).

The (2R)-3-phosphoglycerate site is built by Val23, Asp24, Phe25, Asn26, Gln38, Arg39, Ser62, His63, Gly65, Arg66, Leu121, Arg122, His169, and Arg170. Gly213 provides a ligand contact to ADP. Gly213 lines the CDP pocket. AMP-binding residues include Ala214 and Lys215. An ATP-binding site is contributed by Ala214. Ala214 lines the Mg(2+) pocket. Mg(2+) is bound by residues Ala217 and Asp218. Residue Asp218 coordinates CDP. Position 219 (Lys219) interacts with AMP. Lys219 provides a ligand contact to ATP. Gly237 is a binding site for ADP. Residue Gly237 coordinates CDP. Residues Gly238 and Gly312 each contribute to the AMP site. ATP-binding residues include Gly238 and Gly312. Residues Gly337, Ala339, and Phe342 each coordinate CDP. Phe342 provides a ligand contact to ADP. Position 343 (Glu343) interacts with AMP. Glu343, Asp374, and Thr375 together coordinate ATP. Residue Asp374 coordinates Mg(2+).

It belongs to the phosphoglycerate kinase family. Monomer. Requires Mg(2+) as cofactor.

The protein localises to the cytoplasm. It carries out the reaction (2R)-3-phosphoglycerate + ATP = (2R)-3-phospho-glyceroyl phosphate + ADP. Its pathway is carbohydrate degradation; glycolysis; pyruvate from D-glyceraldehyde 3-phosphate: step 2/5. The protein is Probable phosphoglycerate kinase (pgk-1) of Caenorhabditis elegans.